Here is a 395-residue protein sequence, read N- to C-terminus: Flap endonuclease 1 (395 aa).

Residues 1-104 (MGIKHLYQII…GELAKRIARK (104 aa)) form an N-domain region. Position 34 (Asp-34) interacts with Mg(2+). Arg-47 and Arg-70 together coordinate DNA. Asp-86 is a Mg(2+) binding site. Residues 103-123 (RKQEAAEQHEEAKETGTTEDV) form a disordered region. The interval 122-253 (DVEKFSRRTV…NTALKLIRDH (132 aa)) is I-domain. Glu-158, Glu-160, Asp-179, and Asp-181 together coordinate Mg(2+). Glu-158 contributes to the DNA binding site. DNA contacts are provided by Gly-231 and Asp-233. Mg(2+) is bound at residue Asp-233. The tract at residues 341 to 349 (QQSRLEGFF) is interaction with PCNA. A compositionally biased stretch (basic and acidic residues) spans 356–389 (DEEKASLKRKHEEKLEAAKKKKKEDAKAKREAKS). Positions 356–395 (DEEKASLKRKHEEKLEAAKKKKKEDAKAKREAKSRPKGTA) are disordered.

This sequence belongs to the XPG/RAD2 endonuclease family. FEN1 subfamily. As to quaternary structure, interacts with PCNA. Three molecules of FEN1 bind to one PCNA trimer with each molecule binding to one PCNA monomer. PCNA stimulates the nuclease activity without altering cleavage specificity. Mg(2+) is required as a cofactor. In terms of processing, phosphorylated. Phosphorylation upon DNA damage induces relocalization to the nuclear plasma.

The protein resides in the nucleus. It is found in the nucleolus. The protein localises to the nucleoplasm. Its subcellular location is the mitochondrion. Structure-specific nuclease with 5'-flap endonuclease and 5'-3' exonuclease activities involved in DNA replication and repair. During DNA replication, cleaves the 5'-overhanging flap structure that is generated by displacement synthesis when DNA polymerase encounters the 5'-end of a downstream Okazaki fragment. It enters the flap from the 5'-end and then tracks to cleave the flap base, leaving a nick for ligation. Also involved in the long patch base excision repair (LP-BER) pathway, by cleaving within the apurinic/apyrimidinic (AP) site-terminated flap. Acts as a genome stabilization factor that prevents flaps from equilibrating into structures that lead to duplications and deletions. Also possesses 5'-3' exonuclease activity on nicked or gapped double-stranded DNA, and exhibits RNase H activity. Also involved in replication and repair of rDNA and in repairing mitochondrial DNA. The chain is Flap endonuclease 1 from Uncinocarpus reesii (strain UAMH 1704).